Here is a 61-residue protein sequence, read N- to C-terminus: UPF0434 protein Bpet2671 (61 aa).

It belongs to the UPF0434 family.

The polypeptide is UPF0434 protein Bpet2671 (Bordetella petrii (strain ATCC BAA-461 / DSM 12804 / CCUG 43448)).